The following is a 40-amino-acid chain: Omega-conotoxin RsXXVIA (40 aa).

In terms of processing, contains 4 disulfide bonds. Expressed by the venom duct.

The protein resides in the secreted. Omega-conotoxins act at presynaptic membranes, they bind and block voltage-gated calcium channels (Cav). This toxin inhibits rat Cav2.2/CACNA1B calcium channels in a dose-dependent manner (EC(50)=2.8 uM), whose effect is partially reversed after washing. In vivo, when injected into mice, it shows both an analgesic effect in acute thermal pain at 30 and 45 minutes post-injection and an anti-nociceptive effect in a formalin chronic pain test. The chain is Omega-conotoxin RsXXVIA from Conus regularis (Regular cone).